Reading from the N-terminus, the 139-residue chain is Translation initiation factor 2 subunit beta (139 aa).

It belongs to the eIF-2-beta/eIF-5 family. As to quaternary structure, heterotrimer composed of an alpha, a beta and a gamma chain.

Functionally, eIF-2 functions in the early steps of protein synthesis by forming a ternary complex with GTP and initiator tRNA. The sequence is that of Translation initiation factor 2 subunit beta from Nanoarchaeum equitans (strain Kin4-M).